A 141-amino-acid polypeptide reads, in one-letter code: Holo-[acyl-carrier-protein] synthase (141 aa).

Aspartate 8 and glutamate 61 together coordinate Mg(2+).

The protein belongs to the P-Pant transferase superfamily. AcpS family. The cofactor is Mg(2+).

The protein localises to the cytoplasm. The catalysed reaction is apo-[ACP] + CoA = holo-[ACP] + adenosine 3',5'-bisphosphate + H(+). Transfers the 4'-phosphopantetheine moiety from coenzyme A to a Ser of acyl-carrier-protein. The polypeptide is Holo-[acyl-carrier-protein] synthase (Rhodopseudomonas palustris (strain HaA2)).